A 637-amino-acid chain; its full sequence is Threonine--tRNA ligase (637 aa).

In terms of domain architecture, TGS spans 1-61; it reads MIKVTLKDGK…DKDCNLEILT (61 aa). The tract at residues 242-532 is catalytic; that stretch reads DHRKIGKELD…LIEHYAGAFP (291 aa). Zn(2+) is bound by residues cysteine 333, histidine 384, and histidine 509.

Belongs to the class-II aminoacyl-tRNA synthetase family. Homodimer. The cofactor is Zn(2+).

It is found in the cytoplasm. It catalyses the reaction tRNA(Thr) + L-threonine + ATP = L-threonyl-tRNA(Thr) + AMP + diphosphate + H(+). Functionally, catalyzes the attachment of threonine to tRNA(Thr) in a two-step reaction: L-threonine is first activated by ATP to form Thr-AMP and then transferred to the acceptor end of tRNA(Thr). Also edits incorrectly charged L-seryl-tRNA(Thr). The protein is Threonine--tRNA ligase of Clostridium acetobutylicum (strain ATCC 824 / DSM 792 / JCM 1419 / IAM 19013 / LMG 5710 / NBRC 13948 / NRRL B-527 / VKM B-1787 / 2291 / W).